Here is a 95-residue protein sequence, read N- to C-terminus: Aspartyl/glutamyl-tRNA(Asn/Gln) amidotransferase subunit C (95 aa).

This sequence belongs to the GatC family. As to quaternary structure, heterotrimer of A, B and C subunits.

The enzyme catalyses L-glutamyl-tRNA(Gln) + L-glutamine + ATP + H2O = L-glutaminyl-tRNA(Gln) + L-glutamate + ADP + phosphate + H(+). It carries out the reaction L-aspartyl-tRNA(Asn) + L-glutamine + ATP + H2O = L-asparaginyl-tRNA(Asn) + L-glutamate + ADP + phosphate + 2 H(+). Allows the formation of correctly charged Asn-tRNA(Asn) or Gln-tRNA(Gln) through the transamidation of misacylated Asp-tRNA(Asn) or Glu-tRNA(Gln) in organisms which lack either or both of asparaginyl-tRNA or glutaminyl-tRNA synthetases. The reaction takes place in the presence of glutamine and ATP through an activated phospho-Asp-tRNA(Asn) or phospho-Glu-tRNA(Gln). This Pelobacter propionicus (strain DSM 2379 / NBRC 103807 / OttBd1) protein is Aspartyl/glutamyl-tRNA(Asn/Gln) amidotransferase subunit C.